The following is a 308-amino-acid chain: Elongation factor Ts (308 aa).

Positions 79 to 82 (TDFV) are involved in Mg(2+) ion dislocation from EF-Tu.

The protein belongs to the EF-Ts family.

The protein localises to the cytoplasm. Functionally, associates with the EF-Tu.GDP complex and induces the exchange of GDP to GTP. It remains bound to the aminoacyl-tRNA.EF-Tu.GTP complex up to the GTP hydrolysis stage on the ribosome. The protein is Elongation factor Ts of Bdellovibrio bacteriovorus (strain ATCC 15356 / DSM 50701 / NCIMB 9529 / HD100).